A 332-amino-acid polypeptide reads, in one-letter code: 4-hydroxythreonine-4-phosphate dehydrogenase (332 aa).

2 residues coordinate substrate: His-138 and Thr-139. A divalent metal cation-binding residues include His-168, His-213, and His-269. Substrate-binding residues include Lys-277, Asn-286, and Arg-295.

The protein belongs to the PdxA family. In terms of assembly, homodimer. Zn(2+) is required as a cofactor. The cofactor is Mg(2+). It depends on Co(2+) as a cofactor.

The protein localises to the cytoplasm. It catalyses the reaction 4-(phosphooxy)-L-threonine + NAD(+) = 3-amino-2-oxopropyl phosphate + CO2 + NADH. Its pathway is cofactor biosynthesis; pyridoxine 5'-phosphate biosynthesis; pyridoxine 5'-phosphate from D-erythrose 4-phosphate: step 4/5. Its function is as follows. Catalyzes the NAD(P)-dependent oxidation of 4-(phosphooxy)-L-threonine (HTP) into 2-amino-3-oxo-4-(phosphooxy)butyric acid which spontaneously decarboxylates to form 3-amino-2-oxopropyl phosphate (AHAP). This chain is 4-hydroxythreonine-4-phosphate dehydrogenase, found in Vibrio parahaemolyticus serotype O3:K6 (strain RIMD 2210633).